We begin with the raw amino-acid sequence, 121 residues long: Small ribosomal subunit protein bS16 (121 aa).

Positions 97-114 (LAKAKTKDGDNDSSKAES) are enriched in basic and acidic residues. The segment at 97-121 (LAKAKTKDGDNDSSKAESESNEAET) is disordered.

It belongs to the bacterial ribosomal protein bS16 family.

This is Small ribosomal subunit protein bS16 from Prochlorococcus marinus (strain MIT 9301).